Here is a 336-residue protein sequence, read N- to C-terminus: MIEFVIPKKLKVEEEREERDYYYSRFSLSPLERGYAITIGNALRRVLLSSIPSLAIVGVRFIKPEKYHEYDYIEGVKEDILDIILNLKKVQFRINVTVKGTIKMEVEKKGPGELVAGDIKTPAGIEVVNPDLHIATLNSKADLFFEVYAEVGKGFVPVSEREERPDVGWIPIDGVFSPVIKVNFLTENVRVGKRTDYDKLILEIWTKKSIRPEEALRKAADILINHFKIVTEGLPELKISEEYIITSEEEEAEVPASEHEEEHRENSDVYNRKIDELELSVRSLNCLKRAKIETIGDLLSKTEEELLKIKNFGQKSLDEVKEKLKEKFGLELRKGE.

Residues 1–235 form an alpha N-terminal domain (alpha-NTD) region; it reads MIEFVIPKKL…HFKIVTEGLP (235 aa). Positions 264-336 are alpha C-terminal domain (alpha-CTD); that stretch reads RENSDVYNRK…KFGLELRKGE (73 aa).

The protein belongs to the RNA polymerase alpha chain family. Homodimer. The RNAP catalytic core consists of 2 alpha, 1 beta, 1 beta' and 1 omega subunit. When a sigma factor is associated with the core the holoenzyme is formed, which can initiate transcription.

It catalyses the reaction RNA(n) + a ribonucleoside 5'-triphosphate = RNA(n+1) + diphosphate. DNA-dependent RNA polymerase catalyzes the transcription of DNA into RNA using the four ribonucleoside triphosphates as substrates. The sequence is that of DNA-directed RNA polymerase subunit alpha from Thermotoga maritima (strain ATCC 43589 / DSM 3109 / JCM 10099 / NBRC 100826 / MSB8).